Reading from the N-terminus, the 303-residue chain is Acetaldehyde dehydrogenase 2 (303 aa).

The active-site Acyl-thioester intermediate is the Cys-130. NAD(+)-binding positions include 161-169 (SVGPGTRKN) and Asn-272.

Belongs to the acetaldehyde dehydrogenase family.

It carries out the reaction acetaldehyde + NAD(+) + CoA = acetyl-CoA + NADH + H(+). This Burkholderia vietnamiensis (strain G4 / LMG 22486) (Burkholderia cepacia (strain R1808)) protein is Acetaldehyde dehydrogenase 2.